A 60-amino-acid chain; its full sequence is Cytochrome c oxidase subunit 9, mitochondrial (60 aa).

Topologically, residues 1-15 (MSALAPITGTLKKRI) are mitochondrial matrix. Residues 16 to 38 (ITDIVIGFSLGGVMASYWWWGFH) form a helical membrane-spanning segment. The Mitochondrial intermembrane segment spans residues 39-57 (KNVIDRREAFYADLAEKKK). Residues 58–60 (AEN) constitute a propeptide, removed in mature form.

It belongs to the fungal cytochrome c oxidase subunit 7a family. As to quaternary structure, component of the cytochrome c oxidase (complex IV, CIV), a multisubunit enzyme composed of a catalytic core of 3 subunits and several supernumerary subunits. The complex exists as a monomer or a dimer and forms supercomplexes (SCs) in the inner mitochondrial membrane with ubiquinol-cytochrome c oxidoreductase (cytochrome b-c1 complex, complex III, CIII).

It localises to the mitochondrion inner membrane. Its pathway is energy metabolism; oxidative phosphorylation. Component of the cytochrome c oxidase, the last enzyme in the mitochondrial electron transport chain which drives oxidative phosphorylation. The respiratory chain contains 3 multisubunit complexes succinate dehydrogenase (complex II, CII), ubiquinol-cytochrome c oxidoreductase (cytochrome b-c1 complex, complex III, CIII) and cytochrome c oxidase (complex IV, CIV), that cooperate to transfer electrons derived from NADH and succinate to molecular oxygen, creating an electrochemical gradient over the inner membrane that drives transmembrane transport and the ATP synthase. Cytochrome c oxidase is the component of the respiratory chain that catalyzes the reduction of oxygen to water. Electrons originating from reduced cytochrome c in the intermembrane space (IMS) are transferred via the dinuclear copper A center (CU(A)) of subunit 2 and heme A of subunit 1 to the active site in subunit 1, a binuclear center (BNC) formed by heme A3 and copper B (CU(B)). The BNC reduces molecular oxygen to 2 water molecules using 4 electrons from cytochrome c in the IMS and 4 protons from the mitochondrial matrix. In Candida glabrata (strain ATCC 2001 / BCRC 20586 / JCM 3761 / NBRC 0622 / NRRL Y-65 / CBS 138) (Yeast), this protein is Cytochrome c oxidase subunit 9, mitochondrial (COX9).